A 305-amino-acid chain; its full sequence is Phosphatidylinositol:ceramide inositolphosphotransferase 2 (305 aa).

Transmembrane regions (helical) follow at residues 34–54, 81–101, 105–125, 168–188, 198–218, and 221–241; these read LLAG…VHYI, ETVF…PFIL, KIYT…CQFL, VMYG…LVFV, RFIK…IIAS, and HYSV…FCLD. H180 is a catalytic residue. Catalysis depends on residues H221 and D225.

The protein belongs to the sphingomyelin synthase family. Expressed in leaves, roots, stems, flowers and siliques.

It localises to the golgi apparatus. The protein resides in the trans-Golgi network membrane. The catalysed reaction is an N-(2R-hydroxy-very-long-chain fatty acyl)-(R)-4-hydroxysphingoid base + a 1,2-diacyl-sn-glycero-3-phospho-(1D-myo-inositol) = a 1D-myo-inositol-1-phospho-N-[(R)-2-hydroxy-very-long-chain fatty acyl]-(R)-4-hydroxysphingoid base + a 1,2-diacyl-sn-glycerol. The protein operates within sphingolipid metabolism. Its function is as follows. Catalyzes the transfer of the phosphorylinositol group from phosphatidylinositol (PI) to phytoceramide, an essential step in sphingolipid biosynthesis. May play an important role in modulating plant programmed cell death (PCD) associated with defense (e.g. toward Golovinomyces cichoracearum) by promoting sphingolipid metabolism and thus regulating ceramide accumulation. The protein is Phosphatidylinositol:ceramide inositolphosphotransferase 2 of Arabidopsis thaliana (Mouse-ear cress).